The chain runs to 327 residues: Transaldolase (327 aa).

Lysine 132 (schiff-base intermediate with substrate) is an active-site residue.

The protein belongs to the transaldolase family. Type 1 subfamily.

It localises to the cytoplasm. It catalyses the reaction D-sedoheptulose 7-phosphate + D-glyceraldehyde 3-phosphate = D-erythrose 4-phosphate + beta-D-fructose 6-phosphate. It functions in the pathway carbohydrate degradation; pentose phosphate pathway; D-glyceraldehyde 3-phosphate and beta-D-fructose 6-phosphate from D-ribose 5-phosphate and D-xylulose 5-phosphate (non-oxidative stage): step 2/3. Transaldolase is important for the balance of metabolites in the pentose-phosphate pathway. This chain is Transaldolase, found in Chlamydia trachomatis serovar D (strain ATCC VR-885 / DSM 19411 / UW-3/Cx).